The chain runs to 310 residues: U-megalopygitoxin(8)-Mo15 (310 aa).

An N-terminal signal peptide occupies residues 1–27 (MARFSSKNLTKLFQYLVLSLLSPVAFG).

It belongs to the megalysin family. Contains 3 disulfide bonds. As to expression, expressed by the venom apparatus.

It localises to the secreted. The protein resides in the target cell membrane. May function as a large pore-forming protein. The sequence is that of U-megalopygitoxin(8)-Mo15 from Megalopyge opercularis (Southern flannel moth).